The primary structure comprises 274 residues: Pyrroline-5-carboxylate reductase 3 (274 aa).

Ala-2 carries the post-translational modification N-acetylalanine.

Belongs to the pyrroline-5-carboxylate reductase family. Homodecamer; composed of 5 homodimers.

Its subcellular location is the cytoplasm. The enzyme catalyses L-proline + NADP(+) = (S)-1-pyrroline-5-carboxylate + NADPH + 2 H(+). The catalysed reaction is L-proline + NAD(+) = (S)-1-pyrroline-5-carboxylate + NADH + 2 H(+). It functions in the pathway amino-acid biosynthesis; L-proline biosynthesis; L-proline from L-glutamate 5-semialdehyde: step 1/1. Oxidoreductase that catalyzes the last step in proline biosynthesis, which corresponds to the reduction of pyrroline-5-carboxylate (P5C) to L-proline using NAD(P)H. Proline is synthesized from either glutamate or ornithine; both are converted to P5C, and then to proline via pyrroline-5-carboxylate reductases (PYCRs). PYCR3 is exclusively linked to the biosynthesis of proline from ornithine. The chain is Pyrroline-5-carboxylate reductase 3 from Rattus norvegicus (Rat).